A 541-amino-acid chain; its full sequence is Protein VAPYRIN (541 aa).

The 135-residue stretch at 4–138 (LIKLDPSNIV…IDSAIKVMFV (135 aa)) folds into the MSP domain. ANK repeat units follow at residues 176–205 (QGQT…DIEA), 209–238 (VGST…NTEG), 242–271 (SVFR…RVDS), 275–304 (DGNT…RTDV), 309–338 (EGDT…TKYV), 342–372 (LGKT…CAAA), 374–392 (KGEV…VING), 396–425 (NGWT…DLDA), 429–458 (DGYT…DVEA), and 462–491 (KGVS…SREG).

In terms of assembly, interacts with EX70I at the periarbuscular membrane (PAM) around the arbuscule hyphal tips. In terms of tissue distribution, expressed in roots.

It localises to the cytoplasm. The protein localises to the nucleus. It is found in the cell membrane. Required for arbuscular mycorrhizal (AM) symbiosis with AM fungi (e.g. Glomus versiforme and Gigaspora gigantea) both during fungal passage across root epidermis and for arbuscule formation in cortical cells; this symbiosis promotes phosphorus (P) and copper (Cu) uptake. Essential for infection by symbiotic nitrogen-fixing rhizobial bacteria (e.g. Sinorhizobium meliloti) leading to the formation of root nodules. This is Protein VAPYRIN from Medicago truncatula (Barrel medic).